A 188-amino-acid chain; its full sequence is Elongation factor P (188 aa).

Belongs to the elongation factor P family.

It is found in the cytoplasm. The protein operates within protein biosynthesis; polypeptide chain elongation. Functionally, involved in peptide bond synthesis. Stimulates efficient translation and peptide-bond synthesis on native or reconstituted 70S ribosomes in vitro. Probably functions indirectly by altering the affinity of the ribosome for aminoacyl-tRNA, thus increasing their reactivity as acceptors for peptidyl transferase. The protein is Elongation factor P of Acidiphilium cryptum (strain JF-5).